The chain runs to 361 residues: DNA replication and repair protein RecF (361 aa).

Position 30–37 (30–37 (GDNAQGKT)) interacts with ATP.

It belongs to the RecF family.

It localises to the cytoplasm. In terms of biological role, the RecF protein is involved in DNA metabolism; it is required for DNA replication and normal SOS inducibility. RecF binds preferentially to single-stranded, linear DNA. It also seems to bind ATP. The polypeptide is DNA replication and repair protein RecF (Clostridium perfringens (strain ATCC 13124 / DSM 756 / JCM 1290 / NCIMB 6125 / NCTC 8237 / Type A)).